Here is a 404-residue protein sequence, read N- to C-terminus: CD2 homolog (404 aa).

Residues 1-16 form the signal peptide; it reads MFITLIFLSYINIVLS. Residues 17-225 lie on the Extracellular side of the membrane; the sequence is NNYWARLNET…QNYFLENIHT (209 aa). Asn-24, Asn-87, Asn-92, Asn-96, Asn-122, Asn-139, Asn-167, Asn-193, Asn-200, and Asn-206 each carry an N-linked (GlcNAc...) asparagine; by host glycan. 2 cysteine pairs are disulfide-bonded: Cys-140/Cys-207 and Cys-147/Cys-190. The chain crosses the membrane as a helical span at residues 226–246; that stretch reads LFYIIIFIVSGLIASIFISII. Residues 247-404 are Cytoplasmic-facing; the sequence is TFLSLRKRKK…ISLIHVDRII (158 aa). Residues 260-295 are disordered; it reads EIESPPPESNEEEQCQHDDTTSIHEPSPREPLLPKP. Residues 273-287 are compositionally biased toward basic and acidic residues; sequence QCQHDDTTSIHEPSP. 7 consecutive repeat copies span residues 322–327, 328–333, 334–339, 340–345, 346–351, 352–357, and 358–363. The interval 322-363 is 7 X 6 AA tandem repeats of [KN]-P-C-P-P-P; sequence NPCPPPKPCPPPKPCPPPKPCPPPKPCPPPKPCPPPKPCPPP. Over residues 357–388 the composition is skewed to pro residues; that stretch reads PKPCPPPKPCSSPESYSPPKPLPSIPLLPNIP. The segment at 357-390 is disordered; it reads PKPCPPPKPCSSPESYSPPKPLPSIPLLPNIPPL.

Belongs to the asfivirus CD2 homolog protein family. In terms of assembly, both glycosylated and nonglycosylated forms interact (via C-terminus) with the host AP-1 complex. Post-translationally, cleaved into two fragments of 63 kDa and 26 kDa containing respectively the glycosylated N-terminus and the nonglycosylated C-terminus. A full-length 89-kDa glycosylated form also exists.

It is found in the host membrane. The protein localises to the virion membrane. Its subcellular location is the host Golgi apparatus. Its function is as follows. May play an immunosuppressive role by inhibiting lymphocyte proliferation and subsequently facilitating viral replication and generalization of infection. Responsible for viral hemadsorption, which may help viral spread. Increases virus replication in the tick vector at the step of virus uptake or replication in the tick gut. May play a role in the host Golgi reorganization to yield viral factories. May play a role in host cell penetration. This is CD2 homolog from African swine fever virus (isolate Tick/South Africa/Pretoriuskop Pr4/1996) (ASFV).